A 281-amino-acid polypeptide reads, in one-letter code: 3-methyl-2-oxobutanoate hydroxymethyltransferase (281 aa).

Positions 44 and 83 each coordinate Mg(2+). 3-methyl-2-oxobutanoate-binding positions include 44 to 45 (DS), Asp83, and Lys112. Glu114 lines the Mg(2+) pocket. Glu180 serves as the catalytic Proton acceptor. The tract at residues 251-281 (RNGTFPGPEHSSRMDPAELAAALGSQDQATE) is disordered.

Belongs to the PanB family. As to quaternary structure, homodecamer; pentamer of dimers. It depends on Mg(2+) as a cofactor.

Its subcellular location is the cytoplasm. It catalyses the reaction 3-methyl-2-oxobutanoate + (6R)-5,10-methylene-5,6,7,8-tetrahydrofolate + H2O = 2-dehydropantoate + (6S)-5,6,7,8-tetrahydrofolate. It functions in the pathway cofactor biosynthesis; (R)-pantothenate biosynthesis; (R)-pantoate from 3-methyl-2-oxobutanoate: step 1/2. In terms of biological role, catalyzes the reversible reaction in which hydroxymethyl group from 5,10-methylenetetrahydrofolate is transferred onto alpha-ketoisovalerate to form ketopantoate. The polypeptide is 3-methyl-2-oxobutanoate hydroxymethyltransferase (Chloroflexus aurantiacus (strain ATCC 29364 / DSM 637 / Y-400-fl)).